The following is a 698-amino-acid chain: Elongation factor G (698 aa).

The 281-residue stretch at 11 to 291 (THFRNIGIAA…AVVDYLPSPL (281 aa)) folds into the tr-type G domain. GTP contacts are provided by residues 20-27 (AHIDAGKT), 90-94 (DTPGH), and 144-147 (NKMD).

The protein belongs to the TRAFAC class translation factor GTPase superfamily. Classic translation factor GTPase family. EF-G/EF-2 subfamily.

The protein resides in the cytoplasm. Functionally, catalyzes the GTP-dependent ribosomal translocation step during translation elongation. During this step, the ribosome changes from the pre-translocational (PRE) to the post-translocational (POST) state as the newly formed A-site-bound peptidyl-tRNA and P-site-bound deacylated tRNA move to the P and E sites, respectively. Catalyzes the coordinated movement of the two tRNA molecules, the mRNA and conformational changes in the ribosome. The chain is Elongation factor G from Deinococcus radiodurans (strain ATCC 13939 / DSM 20539 / JCM 16871 / CCUG 27074 / LMG 4051 / NBRC 15346 / NCIMB 9279 / VKM B-1422 / R1).